The chain runs to 368 residues: F-box only protein 28 (368 aa).

The span at 1-11 (MAAASEERMAE) shows a compositional bias: basic and acidic residues. The interval 1-57 (MAAASEERMAEEGGGGHGDGGSPSAIASTQRLPPPPPPQPPQPGSQAPPAPALAPDQ) is disordered. The span at 12–21 (EGGGGHGDGG) shows a compositional bias: gly residues. The segment covering 32 to 52 (LPPPPPPQPPQPGSQAPPAPA) has biased composition (pro residues). In terms of domain architecture, F-box spans 61-109 (NNTLVALPIVAIENILSFMSYDEISQLRLVCKRMDLVCQRMLNQGFLKV). Serine 235 and serine 242 each carry phosphoserine. Threonine 270 is modified (phosphothreonine). Residues 328–368 (MESAVGNSSGSGQSEESPRKRKKAAEAIDSLRKSKRLRNRK) are disordered. Serine 344 is modified (phosphoserine).

In terms of assembly, part of a SCF (SKP1-cullin-F-box) protein ligase complex.

The protein resides in the chromosome. The protein localises to the centromere. It localises to the kinetochore. Probably recognizes and binds to some phosphorylated proteins and promotes their ubiquitination and degradation. The polypeptide is F-box only protein 28 (FBXO28) (Bos taurus (Bovine)).